The chain runs to 362 residues: S-adenosylmethionine:tRNA ribosyltransferase-isomerase (362 aa).

Belongs to the QueA family. Monomer.

It is found in the cytoplasm. It carries out the reaction 7-aminomethyl-7-carbaguanosine(34) in tRNA + S-adenosyl-L-methionine = epoxyqueuosine(34) in tRNA + adenine + L-methionine + 2 H(+). The protein operates within tRNA modification; tRNA-queuosine biosynthesis. Its function is as follows. Transfers and isomerizes the ribose moiety from AdoMet to the 7-aminomethyl group of 7-deazaguanine (preQ1-tRNA) to give epoxyqueuosine (oQ-tRNA). This is S-adenosylmethionine:tRNA ribosyltransferase-isomerase from Methylobacterium sp. (strain 4-46).